A 394-amino-acid polypeptide reads, in one-letter code: Phenylalanine 4-monooxygenase, chloroplastic (394 aa).

The N-terminal 79 residues, 1–79, are a transit peptide targeting the chloroplast; the sequence is MAMEVGYLRH…LNQIQAVSTA (79 aa). Positions 75-97 are disordered; it reads AVSTAEKEREADKTSTPPIPSSI. Residues His-252, His-257, and Glu-297 each contribute to the Fe cation site.

The protein belongs to the biopterin-dependent aromatic amino acid hydroxylase family. As to quaternary structure, forms monomers. It depends on Fe(2+) as a cofactor.

It localises to the plastid. Its subcellular location is the chloroplast. The enzyme catalyses (6R)-L-erythro-5,6,7,8-tetrahydrobiopterin + L-phenylalanine + O2 = (4aS,6R)-4a-hydroxy-L-erythro-5,6,7,8-tetrahydrobiopterin + L-tyrosine. Functionally, catalyzes the hydroxylation of L-phenylalanine to L-tyrosine. Does not seem to be tetrahydropterin-dependent and shows preference for 10-formyltetrahydrofolate as cosubstrate and electron donor. The protein is Phenylalanine 4-monooxygenase, chloroplastic of Physcomitrium patens (Spreading-leaved earth moss).